The chain runs to 623 residues: Putative pentatricopeptide repeat-containing protein At3g11460, mitochondrial (623 aa).

Residues 1–35 (MIVVTSFVRNSAVAAVASTPWNVRLRELAYQSLFS) constitute a mitochondrion transit peptide. PPR repeat units lie at residues 17–51 (ASTP…GSSP), 52–86 (DAFS…GCET), 87–117 (EPFV…NPQS), 120–154 (LSVC…GVSV), 155–189 (DSVT…GLDS), 190–220 (EVAV…MPVK), 221–255 (GLIT…GVCP), 256–290 (DPFT…GFVP), 291–321 (NVFV…MPVK), 322–356 (SLVS…GIRP), 357–387 (DGAV…MKRE), and 393–423 (GPEH…MPVE). The segment at 428 to 503 (VWGALLGACK…KPGYSYVEHK (76 aa)) is type E motif. Residues 504–535 (GRVHLFLAGDRSHEQTEEVHRMLDELETSVME) are type E(+) motif. Positions 536–623 (LAGNMDCDRG…DGVCSCKDYW (88 aa)) are type DYW motif.

It belongs to the PPR family. PCMP-H subfamily. As to quaternary structure, interacts with MORF8/RIP1.

The protein resides in the mitochondrion. Involved in C-to-U editing of mitochondrial RNA. Required specifically for editing the mitochondrial NAD2 transcript. The sequence is that of Putative pentatricopeptide repeat-containing protein At3g11460, mitochondrial (PCMP-H52) from Arabidopsis thaliana (Mouse-ear cress).